An 84-amino-acid chain; its full sequence is Kunitz-type serine protease inhibitor 2 (84 aa).

An N-terminal signal peptide occupies residues 1–24 (MSSGGLLLLLGLLTLWAEPTPISG). At glutamine 25 the chain carries Pyrrolidone carboxylic acid. A BPTI/Kunitz inhibitor domain is found at 31 to 81 (CFLRPDFGRYGHPRPRFYYNPATNQCQGFLAQRSRENTNNFDTRDKCRQTC). 2 disulfides stabilise this stretch: cysteine 31/cysteine 81 and cysteine 56/cysteine 77.

The protein belongs to the venom Kunitz-type family. Expressed by the venom gland.

The protein resides in the secreted. Functionally, serine protease inhibitor. The polypeptide is Kunitz-type serine protease inhibitor 2 (Daboia russelii (Russel's viper)).